The following is a 196-amino-acid chain: ATP synthase subunit b (196 aa).

A helical membrane pass occupies residues 24–44 (PLSELLIGTLSFALLVAFFFW).

Belongs to the ATPase B chain family. In terms of assembly, F-type ATPases have 2 components, F(1) - the catalytic core - and F(0) - the membrane proton channel. F(1) has five subunits: alpha(3), beta(3), gamma(1), delta(1), epsilon(1). F(0) has three main subunits: a(1), b(2) and c(10-14). The alpha and beta chains form an alternating ring which encloses part of the gamma chain. F(1) is attached to F(0) by a central stalk formed by the gamma and epsilon chains, while a peripheral stalk is formed by the delta and b chains.

The protein resides in the cell membrane. F(1)F(0) ATP synthase produces ATP from ADP in the presence of a proton or sodium gradient. F-type ATPases consist of two structural domains, F(1) containing the extramembraneous catalytic core and F(0) containing the membrane proton channel, linked together by a central stalk and a peripheral stalk. During catalysis, ATP synthesis in the catalytic domain of F(1) is coupled via a rotary mechanism of the central stalk subunits to proton translocation. Its function is as follows. Component of the F(0) channel, it forms part of the peripheral stalk, linking F(1) to F(0). In Frankia casuarinae (strain DSM 45818 / CECT 9043 / HFP020203 / CcI3), this protein is ATP synthase subunit b.